The chain runs to 308 residues: Putative S-adenosyl-L-methionine-dependent methyltransferase Mmcs_1045 (308 aa).

S-adenosyl-L-methionine contacts are provided by residues Asp133 and 162-163; that span reads DL.

Belongs to the UPF0677 family.

Exhibits S-adenosyl-L-methionine-dependent methyltransferase activity. This chain is Putative S-adenosyl-L-methionine-dependent methyltransferase Mmcs_1045, found in Mycobacterium sp. (strain MCS).